The following is a 303-amino-acid chain: Tyrosine recombinase XerC (303 aa).

Residues 1-85 enclose the Core-binding (CB) domain; that stretch reads MRADLDAFLE…ATRGLYQYLL (85 aa). Residues 106–285 form the Tyr recombinase domain; that stretch reads KLPRTLDADR…DFQHLASVYD (180 aa). Residues R146, K170, H237, R240, and H263 contribute to the active site. Catalysis depends on Y272, which acts as the O-(3'-phospho-DNA)-tyrosine intermediate.

The protein belongs to the 'phage' integrase family. XerC subfamily. As to quaternary structure, forms a cyclic heterotetrameric complex composed of two molecules of XerC and two molecules of XerD.

Its subcellular location is the cytoplasm. Functionally, site-specific tyrosine recombinase, which acts by catalyzing the cutting and rejoining of the recombining DNA molecules. The XerC-XerD complex is essential to convert dimers of the bacterial chromosome into monomers to permit their segregation at cell division. It also contributes to the segregational stability of plasmids. The protein is Tyrosine recombinase XerC of Pseudomonas aeruginosa (strain LESB58).